The sequence spans 273 residues: Putative tyrosine-protein phosphatase H16_A0669 (273 aa).

A signal peptide spans 1 to 15; that stretch reads MIKWLQRAGCLSAHA. Residue Cys-169 is the Phosphocysteine intermediate of the active site.

It belongs to the protein-tyrosine phosphatase family.

It carries out the reaction O-phospho-L-tyrosyl-[protein] + H2O = L-tyrosyl-[protein] + phosphate. In Cupriavidus necator (strain ATCC 17699 / DSM 428 / KCTC 22496 / NCIMB 10442 / H16 / Stanier 337) (Ralstonia eutropha), this protein is Putative tyrosine-protein phosphatase H16_A0669.